The following is a 430-amino-acid chain: Isocitrate dehydrogenase [NADP], mitochondrial (430 aa).

A mitochondrion-targeting transit peptide spans 1–27 (MIRASAIQRTAMLLRQLRGFSTSATLA). NADP(+) is bound by residues 101-103 (TIT) and Arg108. A substrate-binding site is contributed by Thr103. Residues 120 to 126 (SPNGTIR), Arg135, and Arg158 each bind substrate. Position 277 (Asp277) interacts with Mn(2+). NADP(+) is bound at residue Lys285. Residue Asp300 participates in Mn(2+) binding. NADP(+) is bound by residues 335 to 340 (GTVTRH) and Asn353.

The protein belongs to the isocitrate and isopropylmalate dehydrogenases family. As to quaternary structure, homodimer. It depends on Mg(2+) as a cofactor. Mn(2+) serves as cofactor.

It localises to the mitochondrion. The catalysed reaction is D-threo-isocitrate + NADP(+) = 2-oxoglutarate + CO2 + NADPH. Mitochondrial IDP1 may regulate flux through the tricarboxylic acid cycle and respiration. Its probably critical function is the production of NADPH. The sequence is that of Isocitrate dehydrogenase [NADP], mitochondrial (IDP1) from Candida tropicalis (Yeast).